The following is a 215-amino-acid chain: Proteasome subunit beta (215 aa).

Residues 1 to 12 (MLGEIQDKVYKG) constitute a propeptide, removed in mature form; by autocatalysis. Threonine 13 functions as the Nucleophile in the catalytic mechanism.

This sequence belongs to the peptidase T1B family. As to quaternary structure, the 20S proteasome core is composed of 14 alpha and 14 beta subunits that assemble into four stacked heptameric rings, resulting in a barrel-shaped structure. The two inner rings, each composed of seven catalytic beta subunits, are sandwiched by two outer rings, each composed of seven alpha subunits. The catalytic chamber with the active sites is on the inside of the barrel. Has a gated structure, the ends of the cylinder being occluded by the N-termini of the alpha-subunits. Is capped at one or both ends by the proteasome regulatory ATPase, PAN.

It localises to the cytoplasm. It carries out the reaction Cleavage of peptide bonds with very broad specificity.. Its activity is regulated as follows. The formation of the proteasomal ATPase PAN-20S proteasome complex, via the docking of the C-termini of PAN into the intersubunit pockets in the alpha-rings, triggers opening of the gate for substrate entry. Interconversion between the open-gate and close-gate conformations leads to a dynamic regulation of the 20S proteasome proteolysis activity. Its function is as follows. Component of the proteasome core, a large protease complex with broad specificity involved in protein degradation. The sequence is that of Proteasome subunit beta from Archaeoglobus profundus (strain DSM 5631 / JCM 9629 / NBRC 100127 / Av18).